Reading from the N-terminus, the 247-residue chain is UDP-2,3-diacylglucosamine hydrolase (247 aa).

Residues Asp8, His10, Asp41, Asn79, and His114 each contribute to the Mn(2+) site. A substrate-binding site is contributed by 79–80 (NR). Substrate contacts are provided by Asp122, Ser160, Asp171, Asn174, and His202. Residues His202 and His204 each coordinate Mn(2+).

This sequence belongs to the LpxH family. The cofactor is Mn(2+).

It localises to the cell inner membrane. It carries out the reaction UDP-2-N,3-O-bis[(3R)-3-hydroxytetradecanoyl]-alpha-D-glucosamine + H2O = 2-N,3-O-bis[(3R)-3-hydroxytetradecanoyl]-alpha-D-glucosaminyl 1-phosphate + UMP + 2 H(+). It functions in the pathway glycolipid biosynthesis; lipid IV(A) biosynthesis; lipid IV(A) from (3R)-3-hydroxytetradecanoyl-[acyl-carrier-protein] and UDP-N-acetyl-alpha-D-glucosamine: step 4/6. In terms of biological role, hydrolyzes the pyrophosphate bond of UDP-2,3-diacylglucosamine to yield 2,3-diacylglucosamine 1-phosphate (lipid X) and UMP by catalyzing the attack of water at the alpha-P atom. Involved in the biosynthesis of lipid A, a phosphorylated glycolipid that anchors the lipopolysaccharide to the outer membrane of the cell. This chain is UDP-2,3-diacylglucosamine hydrolase, found in Xanthomonas oryzae pv. oryzae (strain MAFF 311018).